A 223-amino-acid chain; its full sequence is MAEHADTQSLLRLVTWLSPAFPVGSFSYSGGLEQAIHDRLVTGADDLRLWCETLLDHGTTWNDALLLAEGYRACDDAARLIAASELAEALAGSREWHMETMLLGEAFLAAAGHWPHASLEFPGARAAYPVAVGAVAGAHRTGLEAALAAFLNATISNAVSVAIRCGVTGQRDGVGMLARMEKTIGAVATRATRASLDDLGAATIIADIASLRHEILHSRLFRT.

This sequence belongs to the UreF family. As to quaternary structure, ureD, UreF and UreG form a complex that acts as a GTP-hydrolysis-dependent molecular chaperone, activating the urease apoprotein by helping to assemble the nickel containing metallocenter of UreC. The UreE protein probably delivers the nickel.

It is found in the cytoplasm. Its function is as follows. Required for maturation of urease via the functional incorporation of the urease nickel metallocenter. The chain is Urease accessory protein UreF from Rhizobium meliloti (strain 1021) (Ensifer meliloti).